The following is a 143-amino-acid chain: MAKKITGYIKLQVKAGEANPSPPVGPALGQRGVNIMEFCKAFNAQTQNVEKGLPLPVVITVYADRSFTFITKTPPASVLLKKALGLKSGSSKPNTDKVGTVTRAQLEEIAKMKMPDLTAADMDAAVRTIAGSATSMGLIVEGV.

It belongs to the universal ribosomal protein uL11 family. As to quaternary structure, part of the ribosomal stalk of the 50S ribosomal subunit. Interacts with L10 and the large rRNA to form the base of the stalk. L10 forms an elongated spine to which L12 dimers bind in a sequential fashion forming a multimeric L10(L12)X complex. One or more lysine residues are methylated.

Functionally, forms part of the ribosomal stalk which helps the ribosome interact with GTP-bound translation factors. The sequence is that of Large ribosomal subunit protein uL11 from Methylococcus capsulatus (strain ATCC 33009 / NCIMB 11132 / Bath).